Consider the following 314-residue polypeptide: Olfactory receptor 52K2 (314 aa).

At 1–27 (MSASNITLTHPTAFLLVGIPGLEHLHI) the chain is on the extracellular side. Asparagine 5 is a glycosylation site (N-linked (GlcNAc...) asparagine). Residues 28-48 (WISIPFCLAYTLALLGNCTLL) traverse the membrane as a helical segment. Over 49-56 (LIIQADAA) the chain is Cytoplasmic. A helical transmembrane segment spans residues 57 to 77 (LHEPMYLFLAMLAAIDLVLSS). Over 78 to 101 (SALPKMLAIFWFRDREINFFACLA) the chain is Extracellular. Cysteine 99 and cysteine 191 form a disulfide bridge. Residues 102-122 (QMFFLHSFSIMESAVLLAMAF) form a helical membrane-spanning segment. The Cytoplasmic portion of the chain corresponds to 123–141 (DRYVAICKPLHYTKVLTGS). Residues 142–162 (LITKIGMAAVARAVTLMTPLP) form a helical membrane-spanning segment. The Extracellular segment spans residues 163–198 (FLLRCFHYCRGPVIAHCYCEHMAVVRLACGDTSFNN). The helical transmembrane segment at 199–219 (IYGIAVAMFIVVLDLLLVILS) threads the bilayer. Over 220–239 (YIFILQAVLLLASQEARYKA) the chain is Cytoplasmic. The helical transmembrane segment at 240-260 (FGTCVSHIGAILAFYTTVVIS) threads the bilayer. Residues 261 to 275 (SVMHRVARHAAPHVH) are Extracellular-facing. Residues 276–296 (ILLANFYLLFPPMVNPIIYGV) form a helical membrane-spanning segment. Over 297–314 (KTKQIRESILGVFPRKDM) the chain is Cytoplasmic.

It belongs to the G-protein coupled receptor 1 family.

The protein localises to the cell membrane. Odorant receptor. This is Olfactory receptor 52K2 (OR52K2) from Homo sapiens (Human).